Reading from the N-terminus, the 377-residue chain is Actin-related protein T2 (377 aa).

This sequence belongs to the actin family.

It is found in the cytoplasm. Its subcellular location is the cytoskeleton. This chain is Actin-related protein T2 (ACTRT2), found in Macaca fascicularis (Crab-eating macaque).